We begin with the raw amino-acid sequence, 316 residues long: Acetyl-coenzyme A carboxylase carboxyl transferase subunit alpha (316 aa).

Positions 39 to 293 constitute a CoA carboxyltransferase C-terminal domain; sequence RLQDKSHALT…RQTLLAQLES (255 aa).

The protein belongs to the AccA family. As to quaternary structure, acetyl-CoA carboxylase is a heterohexamer composed of biotin carboxyl carrier protein (AccB), biotin carboxylase (AccC) and two subunits each of ACCase subunit alpha (AccA) and ACCase subunit beta (AccD).

It localises to the cytoplasm. It catalyses the reaction N(6)-carboxybiotinyl-L-lysyl-[protein] + acetyl-CoA = N(6)-biotinyl-L-lysyl-[protein] + malonyl-CoA. It participates in lipid metabolism; malonyl-CoA biosynthesis; malonyl-CoA from acetyl-CoA: step 1/1. Functionally, component of the acetyl coenzyme A carboxylase (ACC) complex. First, biotin carboxylase catalyzes the carboxylation of biotin on its carrier protein (BCCP) and then the CO(2) group is transferred by the carboxyltransferase to acetyl-CoA to form malonyl-CoA. This is Acetyl-coenzyme A carboxylase carboxyl transferase subunit alpha from Azotobacter vinelandii (strain DJ / ATCC BAA-1303).